We begin with the raw amino-acid sequence, 164 residues long: S-ribosylhomocysteine lyase (164 aa).

Positions 61, 65, and 131 each coordinate Fe cation.

It belongs to the LuxS family. Homodimer. It depends on Fe cation as a cofactor.

The catalysed reaction is S-(5-deoxy-D-ribos-5-yl)-L-homocysteine = (S)-4,5-dihydroxypentane-2,3-dione + L-homocysteine. In terms of biological role, involved in the synthesis of autoinducer 2 (AI-2) which is secreted by bacteria and is used to communicate both the cell density and the metabolic potential of the environment. The regulation of gene expression in response to changes in cell density is called quorum sensing. Catalyzes the transformation of S-ribosylhomocysteine (RHC) to homocysteine (HC) and 4,5-dihydroxy-2,3-pentadione (DPD). The sequence is that of S-ribosylhomocysteine lyase from Bifidobacterium longum (strain DJO10A).